An 876-amino-acid chain; its full sequence is Leucine--tRNA ligase (876 aa).

Positions 43–53 (PYPSGRIHMGH) match the 'HIGH' region motif. The short motif at 630–634 (KMSKS) is the 'KMSKS' region element. K633 is a binding site for ATP.

Belongs to the class-I aminoacyl-tRNA synthetase family.

It localises to the cytoplasm. The enzyme catalyses tRNA(Leu) + L-leucine + ATP = L-leucyl-tRNA(Leu) + AMP + diphosphate. This chain is Leucine--tRNA ligase, found in Methylocella silvestris (strain DSM 15510 / CIP 108128 / LMG 27833 / NCIMB 13906 / BL2).